Here is a 316-residue protein sequence, read N- to C-terminus: L-lactate dehydrogenase (316 aa).

NAD(+) contacts are provided by residues Val15, Asp37, Lys42, Tyr68, and 82 to 83 (GL). Substrate contacts are provided by residues Gln85, Arg91, and 123–126 (NPVD). Residues 121 to 123 (ASN) and Thr146 each bind NAD(+). 151-154 (DTSR) contacts substrate. Beta-D-fructose 1,6-bisphosphate contacts are provided by Arg156 and His171. The active-site Proton acceptor is His178. The residue at position 222 (Tyr222) is a Phosphotyrosine. Thr231 contacts substrate.

The protein belongs to the LDH/MDH superfamily. LDH family. Homotetramer.

The protein resides in the cytoplasm. The catalysed reaction is (S)-lactate + NAD(+) = pyruvate + NADH + H(+). It participates in fermentation; pyruvate fermentation to lactate; (S)-lactate from pyruvate: step 1/1. With respect to regulation, allosterically activated by fructose 1,6-bisphosphate (FBP). Functionally, catalyzes the conversion of lactate to pyruvate. The protein is L-lactate dehydrogenase of Borreliella afzelii (strain PKo) (Borrelia afzelii).